We begin with the raw amino-acid sequence, 341 residues long: MKALSKLKPEEGIWMVDAPKPEMGHNDLLIKIRKTAICGTDVHIYNWDEWSQKTIPVPMIAGHEYVGEVVDVGQEVRGFSIGDRVSGEGHITCGHCRNCRAGRTHLCRNTSGVGVNRDGAFAEYLVLPAFNAFKIPADIPDDLAAIFDPFGNAVHTALSFDLVGEDVLITGAGPIGIMAAAVCKHVGARHVVITDVNEYRLDLARKMGATRAVNVATENLKDVMKELGMTEGFDVGLEMSGVPSAFHAMLDTMNHGGKIAMLGIPGGEMAIDWSKIIFKGLIIKGIYGREMFETWYKMASLIQSGLDLSPIITHHFSIDDFQKGFDAMRSGQSGKVILNWD.

Zn(2+) is bound at residue Cys38. Active-site charge relay system residues include Thr40 and His43. Residues His63, Glu64, Cys93, Cys96, Cys99, and Cys107 each contribute to the Zn(2+) site. Residues Ile175, Asp195, Arg200, 262-264, and 286-287 contribute to the NAD(+) site; these read LGI and IY.

It belongs to the zinc-containing alcohol dehydrogenase family. Homotetramer. Zn(2+) is required as a cofactor.

Its subcellular location is the cytoplasm. The enzyme catalyses L-threonine + NAD(+) = (2S)-2-amino-3-oxobutanoate + NADH + H(+). The protein operates within amino-acid degradation; L-threonine degradation via oxydo-reductase pathway; glycine from L-threonine: step 1/2. Functionally, catalyzes the NAD(+)-dependent oxidation of L-threonine to 2-amino-3-ketobutyrate. This chain is L-threonine 3-dehydrogenase, found in Shewanella frigidimarina (strain NCIMB 400).